A 225-amino-acid chain; its full sequence is uncharacterized protein (225 aa).

The 106-residue stretch at 114–219 folds into the Fe2OG dioxygenase domain; the sequence is DAEAIIMQVY…RLSVTMRRII (106 aa).

The protein belongs to the iron/ascorbate-dependent oxidoreductase family.

It localises to the cytoplasm. It is found in the nucleus. This is an uncharacterized protein from Schizosaccharomyces pombe (strain 972 / ATCC 24843) (Fission yeast).